The primary structure comprises 240 residues: uncharacterized protein (240 aa).

A compositionally biased stretch (basic residues) spans 1–11 (MGMTPRRKRRG). The segment at 1–32 (MGMTPRRKRRGGAVQITRPTGRPRTPTTQTTK) is disordered. Residues 17 to 31 (TRPTGRPRTPTTQTT) show a composition bias toward low complexity. 6 helical membrane-spanning segments follow: residues 36–56 (WVVGGTTILTFVALLYLVELI), 93–113 (LMANTIPLLVLGFLMTLAGLS), 115–135 (FVWATAIIWILGGLGTWLIGN), 146–166 (IGASGLIFGWLAFLLVFGLFV), 172–192 (IVIGLVVLFVYGGILLGAMPV), and 198–218 (GVSWQGHLSGAVAGVVAAYLL).

The protein to M.leprae ML1171.

It is found in the cell membrane. This is an uncharacterized protein from Mycobacterium tuberculosis (strain CDC 1551 / Oshkosh).